The chain runs to 31 residues: Toxin BmKK16 (31 aa).

Gln-1 is subject to Pyrrolidone carboxylic acid. 3 disulfides stabilise this stretch: Cys-4–Cys-20, Cys-10–Cys-25, and Cys-14–Cys-27. At Pro-31 the chain carries Proline amide.

The protein belongs to the short scorpion toxin superfamily. Potassium channel inhibitor family. Alpha-KTx 17 subfamily. Post-translationally, the N-terminus is blocked. In terms of tissue distribution, expressed by the venom gland.

It is found in the secreted. In terms of biological role, blocker of potassium channels (Kv). This is Toxin BmKK16 from Olivierus martensii (Manchurian scorpion).